A 154-amino-acid chain; its full sequence is SsrA-binding protein (154 aa).

Positions 134-154 (ETLRRRDAKREVERALKEKNR) are disordered.

Belongs to the SmpB family.

The protein localises to the cytoplasm. Required for rescue of stalled ribosomes mediated by trans-translation. Binds to transfer-messenger RNA (tmRNA), required for stable association of tmRNA with ribosomes. tmRNA and SmpB together mimic tRNA shape, replacing the anticodon stem-loop with SmpB. tmRNA is encoded by the ssrA gene; the 2 termini fold to resemble tRNA(Ala) and it encodes a 'tag peptide', a short internal open reading frame. During trans-translation Ala-aminoacylated tmRNA acts like a tRNA, entering the A-site of stalled ribosomes, displacing the stalled mRNA. The ribosome then switches to translate the ORF on the tmRNA; the nascent peptide is terminated with the 'tag peptide' encoded by the tmRNA and targeted for degradation. The ribosome is freed to recommence translation, which seems to be the essential function of trans-translation. The chain is SsrA-binding protein from Halalkalibacterium halodurans (strain ATCC BAA-125 / DSM 18197 / FERM 7344 / JCM 9153 / C-125) (Bacillus halodurans).